A 331-amino-acid chain; its full sequence is PHD finger protein 11 (331 aa).

Residues lysine 42–leucine 78 form a C2HC pre-PHD-type zinc finger. The segment at leucine 108 to alanine 160 adopts a PHD-type zinc-finger fold.

As to quaternary structure, interacts with BRCA1 and RELA. As to expression, highly expressed in T and B-cells, as well as natural killer and mature dendritic cells. Expressed at higher levels in Th1 as compared to Th2 cells. Expressed at low levels in all normal tissues tested, including lung, testis, small intestine, breast, liver and placenta.

It is found in the nucleus. Its function is as follows. Positive regulator of Th1-type cytokine gene expression. The chain is PHD finger protein 11 (PHF11) from Homo sapiens (Human).